Consider the following 186-residue polypeptide: Probable RNA 2'-phosphotransferase (186 aa).

It belongs to the KptA/TPT1 family.

In terms of biological role, removes the 2'-phosphate from RNA via an intermediate in which the phosphate is ADP-ribosylated by NAD followed by a presumed transesterification to release the RNA and generate ADP-ribose 1''-2''-cyclic phosphate (APPR&gt;P). May function as an ADP-ribosylase. The chain is Probable RNA 2'-phosphotransferase from Clostridium perfringens (strain SM101 / Type A).